Reading from the N-terminus, the 500-residue chain is Cytochrome P450 2D20 (500 aa).

Position 446 (cysteine 446) interacts with heme.

This sequence belongs to the cytochrome P450 family. Heme serves as cofactor.

It is found in the endoplasmic reticulum membrane. It localises to the microsome membrane. The chain is Cytochrome P450 2D20 (CYP2D20) from Mesocricetus auratus (Golden hamster).